The chain runs to 184 residues: Protein Syd (184 aa).

Belongs to the Syd family.

The protein localises to the cell inner membrane. In terms of biological role, interacts with the SecY protein in vivo. May bind preferentially to an uncomplexed state of SecY, thus functioning either as a chelating agent for excess SecY in the cell or as a regulatory factor that negatively controls the translocase function. This is Protein Syd from Psychromonas ingrahamii (strain DSM 17664 / CCUG 51855 / 37).